The following is a 310-amino-acid chain: MATKRKVIITCAPTGAIHTPSMSPYLPVTPQQIGDAALAAAKEGAAIIHLHARDPDDGHPTQDPAVFQEFLPRIKAECDAVINLTTGGSPHMTVAERLKPAHHFQPEVASLNMGSMNFGLYPMLERFKELKYDWERKHLENSRDLVFKNTFADIEYILTSCGANGTRFEFECYDISHLYNLAHFVDRGLAKPPFFVQSVFGLLGGIGAHPEDLAHMRRTADRLFGKDYVWSILGAGRNQIPLASIGVAQGSNARVGLEDSLWIEPGKLAESSAAQVRKIRQVIEGLSLDIATPAEAREMLQLKGAANTNF.

Zn(2+)-binding residues include His49, His51, and Glu258.

It belongs to the BKACE family. It depends on Zn(2+) as a cofactor.

The catalysed reaction is 3,5-dioxohexanoate + acetyl-CoA = acetoacetyl-CoA + acetoacetate. Its function is as follows. Catalyzes the condensation of 3,5-dioxohexanoate and acetyl-CoA, forming acetoacetate and acetoacetyl-CoA. May be involved in fatty acid biosynthesis rescue via triacetic acid lactone. This is 3,5-dioxohexanoate:acetyl-CoA acetone transferase from Paraburkholderia graminis (strain ATCC 700544 / DSM 17151 / LMG 18924 / NCIMB 13744 / C4D1M).